A 445-amino-acid polypeptide reads, in one-letter code: Phosphoglucosamine mutase (445 aa).

Serine 99 functions as the Phosphoserine intermediate in the catalytic mechanism. Serine 99, aspartate 242, aspartate 244, and aspartate 246 together coordinate Mg(2+). Serine 99 bears the Phosphoserine mark.

It belongs to the phosphohexose mutase family. It depends on Mg(2+) as a cofactor. In terms of processing, activated by phosphorylation.

The catalysed reaction is alpha-D-glucosamine 1-phosphate = D-glucosamine 6-phosphate. Its function is as follows. Catalyzes the conversion of glucosamine-6-phosphate to glucosamine-1-phosphate. The protein is Phosphoglucosamine mutase of Campylobacter lari (strain RM2100 / D67 / ATCC BAA-1060).